The sequence spans 691 residues: NADPH--cytochrome P450 reductase (691 aa).

The Lumenal segment spans residues 2 to 7 (PFGIDN). Residues 8-24 (TDFTVLAGLVLAVLLYV) traverse the membrane as a helical segment. Residues 25–691 (KRNSIKELLM…TSGRYQEDVW (667 aa)) are Cytoplasmic-facing. Residues 61-204 (YLVLYASQTG…DYMAWKDSIL (144 aa)) enclose the Flavodoxin-like domain. Residues 67–72 (SQTGTA), Lys-78, 116–119 (STYG), 152–161 (LGNSTYEFFN), and Asp-187 contribute to the FMN site. The region spanning 266-529 (SQPYIAPIVK…HVRRSNFRLP (264 aa)) is the FAD-binding FR-type domain. Residue Arg-285 coordinates NADP(+). FAD contacts are provided by residues 439-442 (RYYS), 457-459 (TSI), and 476-479 (GVTT). Residues Thr-543, 610-611 (SR), 617-621 (KVYVQ), and Asp-646 contribute to the NADP(+) site. Lys-666 participates in a covalent cross-link: Glycyl lysine isopeptide (Lys-Gly) (interchain with G-Cter in ubiquitin). Position 691 (Trp-691) interacts with FAD.

Belongs to the NADPH--cytochrome P450 reductase family. It in the N-terminal section; belongs to the flavodoxin family. The protein in the C-terminal section; belongs to the flavoprotein pyridine nucleotide cytochrome reductase family. Interacts with PCL1. It depends on FAD as a cofactor. The cofactor is FMN. Phosphorylated by the cyclin-CDK PCL1-PHO85.

It is found in the endoplasmic reticulum membrane. Its subcellular location is the mitochondrion outer membrane. The protein resides in the cell membrane. It carries out the reaction 2 oxidized [cytochrome P450] + NADPH = 2 reduced [cytochrome P450] + NADP(+) + H(+). In terms of biological role, this enzyme is required for electron transfer from NADP to cytochrome P450 in microsomes. It can also provide electron transfer to heme oxygenase and cytochrome B5. Involved in ergosterol biosynthesis. Has NADPH-dependent ferrireductase activity on the plasma membrane. This chain is NADPH--cytochrome P450 reductase, found in Saccharomyces cerevisiae (strain ATCC 204508 / S288c) (Baker's yeast).